A 429-amino-acid polypeptide reads, in one-letter code: Probable electron transfer flavoprotein-quinone oxidoreductase YdiS (429 aa).

8–22 is a binding site for FAD; sequence AIVVGAGVAGSVAAL.

This sequence belongs to the ETF-QO/FixC family. FAD serves as cofactor.

In terms of biological role, probably accepts electrons from YdiQ/YdiR and reduces a quinone. This is Probable electron transfer flavoprotein-quinone oxidoreductase YdiS (ydiS) from Escherichia coli (strain K12).